We begin with the raw amino-acid sequence, 161 residues long: Cap-associated protein CAF20 (161 aa).

A compositionally biased stretch (basic residues) spans 52–72; it reads HFGRRRSSHHHGRPKIKHNKP. Residues 52-108 form a disordered region; the sequence is HFGRRRSSHHHGRPKIKHNKPKVTTDSDGWCTFEAKKKGSGEDDEEETETTPTSTVP. Residues Ser78 and Ser91 each carry the phosphoserine modification. 3 positions are modified to phosphothreonine: Thr99, Thr101, and Thr102. At Ser154 the chain carries Phosphoserine.

It belongs to the CAF20 family. In terms of assembly, interacts with TIF45. Phosphorylated by casein kinase II complex (CK2).

The protein resides in the cytoplasm. In terms of biological role, acts as an inhibitor of cap-dependent translation. Competes with eIF4G1/TIF4631 and EAP1 for binding to eIF4E/TIF45 and interferes with the formation of the eIF4F complex, inhibiting translation and stabilizing mRNA. Binding affinity for eIF4E/TIF45 is 10-fold less than that of eIF4G1/TIF4631. Required for induction of pseudohyphal growth in response to nitrogen limitation, probably by regulating STE12 translation. The polypeptide is Cap-associated protein CAF20 (CAF20) (Saccharomyces cerevisiae (strain ATCC 204508 / S288c) (Baker's yeast)).